The following is a 430-amino-acid chain: MKQALRVAFGFLILWASVLHAEVRIVIDSGVDSGRPIGVVPFQWAGPGAAPEDIGGIVAADLRNSGKFNPLDRARLPQQPGSAQEVQPAAWSALGIDAVVVGQVTPNPDGSYNVAYQLVDTGGAPGTVLAQNSYKVNKQWLRYAGHTASDEVFEKLTGIKGAFRTRIAYVVQTNGGQFPYELRVSDYDGYNQFVVHRSPQPLMSPAWSPDGSKLAYVTFESGRSALVIQTLANGAVRQVASFPRHNGAPAFSPDGSKLAFALSKTGSLNLYVMDLASGQIRQVTDGRSNNTEPTWFPDSQNLAFTSDQAGRPQVYKVNINGGAPQRITWEGSQNQDADVSSDGKFMVMVSSNGGQQHIAKQDLATGGVQVLSSTFLDETPSLAPNGTMVIYSSSQGMGSVLNLVSTDGRFKARLPATDGQVKFPAWSPYL.

The N-terminal stretch at 1-21 (MKQALRVAFGFLILWASVLHA) is a signal peptide.

Belongs to the TolB family. As to quaternary structure, the Tol-Pal system is composed of five core proteins: the inner membrane proteins TolA, TolQ and TolR, the periplasmic protein TolB and the outer membrane protein Pal. They form a network linking the inner and outer membranes and the peptidoglycan layer.

The protein localises to the periplasm. Its function is as follows. Part of the Tol-Pal system, which plays a role in outer membrane invagination during cell division and is important for maintaining outer membrane integrity. TolB occupies a key intermediary position in the Tol-Pal system because it communicates directly with both membrane-embedded components, Pal in the outer membrane and TolA in the inner membrane. This chain is Tol-Pal system protein TolB, found in Escherichia coli O139:H28 (strain E24377A / ETEC).